Consider the following 345-residue polypeptide: Tetraacyldisaccharide 4'-kinase (345 aa).

Thr61–Thr68 is an ATP binding site.

The protein belongs to the LpxK family.

The enzyme catalyses a lipid A disaccharide + ATP = a lipid IVA + ADP + H(+). It participates in glycolipid biosynthesis; lipid IV(A) biosynthesis; lipid IV(A) from (3R)-3-hydroxytetradecanoyl-[acyl-carrier-protein] and UDP-N-acetyl-alpha-D-glucosamine: step 6/6. Transfers the gamma-phosphate of ATP to the 4'-position of a tetraacyldisaccharide 1-phosphate intermediate (termed DS-1-P) to form tetraacyldisaccharide 1,4'-bis-phosphate (lipid IVA). In Xanthomonas axonopodis pv. citri (strain 306), this protein is Tetraacyldisaccharide 4'-kinase.